A 384-amino-acid polypeptide reads, in one-letter code: 8-amino-7-oxononanoate synthase (384 aa).

Arg21 contacts substrate. Gly108–Phe109 provides a ligand contact to pyridoxal 5'-phosphate. His133 contacts substrate. Ser179, His207, and Thr233 together coordinate pyridoxal 5'-phosphate. Residue Lys236 is modified to N6-(pyridoxal phosphate)lysine. Thr352 contributes to the substrate binding site.

The protein belongs to the class-II pyridoxal-phosphate-dependent aminotransferase family. BioF subfamily. Homodimer. The cofactor is pyridoxal 5'-phosphate.

The enzyme catalyses 6-carboxyhexanoyl-[ACP] + L-alanine + H(+) = (8S)-8-amino-7-oxononanoate + holo-[ACP] + CO2. The protein operates within cofactor biosynthesis; biotin biosynthesis. In terms of biological role, catalyzes the decarboxylative condensation of pimeloyl-[acyl-carrier protein] and L-alanine to produce 8-amino-7-oxononanoate (AON), [acyl-carrier protein], and carbon dioxide. The sequence is that of 8-amino-7-oxononanoate synthase from Escherichia coli (strain K12 / DH10B).